The sequence spans 444 residues: MSWNNRVVWSEGMFLRPQHFQQHDRYLETLVDGRCRSLLAGGWGFSELKLDDALLTQGKLAIVSARGVLPDGTPFNIPADDPAPAPLNVEESLRDGIVYLGLPLKRVGTRDTVEEGEALGGARYVSQVQEVRDDNAAFESRAPVALGSQAFRLLTERDGLGEYAAVGVARVREKRADQALSLDEDYLPPVLDIAAAPPLASFAKELLGLLHQRGEALAGRVVASSAGGASEIADFLLLQLVNRAEALTGHLSRVRPLHPQELYRELVALAGEFCTFTASQRRPEEYPVYNHDDLAASFAPVMLALRQALATVIDAKAIAIPIVEKAYGVHVAMLSDRSLIDNASFVLVVRADVPGESLRGHFPQQAKVGSVEHIRDLVNLQLPGIGLLPMPVAPRQIPYHAGSTYFELDRGSAHWKQLTHSGGFAFHIAGQFPGLNLAFWAIRG.

Forms transient higher-order structures that correlated with dynamics of sheath component TssB1. Interacts with TssA1.

Functionally, core component of the H1 type VI (H1-T6SS) secretion system that plays a role in the release of toxins targeting both eukaryotic and prokaryotic species. Functions as a spatio-temporal marker for assembly of contractile apparatus made of TssB1 and TssC1. This role in assembly depends on TssM1. The polypeptide is Type VI secretion system baseplate component TssK1 (Pseudomonas aeruginosa (strain ATCC 15692 / DSM 22644 / CIP 104116 / JCM 14847 / LMG 12228 / 1C / PRS 101 / PAO1)).